Consider the following 166-residue polypeptide: Transcriptional repressor NrdR (166 aa).

A zinc finger spans residues 3-34 (CPFCGFSDSRVLDSRPTVEGNSIRRRRECCGC). The ATP-cone domain occupies 49–139 (LIVVKKDGRR…VYREFRDAES (91 aa)).

The protein belongs to the NrdR family. Zn(2+) serves as cofactor.

Its function is as follows. Negatively regulates transcription of bacterial ribonucleotide reductase nrd genes and operons by binding to NrdR-boxes. This chain is Transcriptional repressor NrdR, found in Pelotomaculum thermopropionicum (strain DSM 13744 / JCM 10971 / SI).